The primary structure comprises 266 residues: Prolactin-7A1 (266 aa).

The first 30 residues, 1–30, serve as a signal peptide directing secretion; it reads MPLSFTQPCSSGALLLLVVSNLLLWENVAC. Asn-36, Asn-58, Asn-110, Asn-149, and Asn-157 each carry an N-linked (GlcNAc...) asparagine glycan. Intrachain disulfides connect Cys-114-Cys-231 and Cys-248-Cys-257.

It belongs to the somatotropin/prolactin family. Expressed specifically in the placenta. Detected only in the trophoblast giant cells.

It localises to the secreted. This chain is Prolactin-7A1 (Prl7a1), found in Mus musculus (Mouse).